The following is a 335-amino-acid chain: Phosphate acyltransferase (335 aa).

It belongs to the PlsX family. As to quaternary structure, homodimer. Probably interacts with PlsY.

It is found in the cytoplasm. The enzyme catalyses a fatty acyl-[ACP] + phosphate = an acyl phosphate + holo-[ACP]. It participates in lipid metabolism; phospholipid metabolism. In terms of biological role, catalyzes the reversible formation of acyl-phosphate (acyl-PO(4)) from acyl-[acyl-carrier-protein] (acyl-ACP). This enzyme utilizes acyl-ACP as fatty acyl donor, but not acyl-CoA. The chain is Phosphate acyltransferase from Streptococcus equi subsp. zooepidemicus (strain H70).